The primary structure comprises 538 residues: Putative outer membrane porin BglH (538 aa).

Residues 1 to 25 (MFRRNIITSAILLMAPLAFSAQSLA) form the signal peptide.

This sequence belongs to the porin LamB (TC 1.B.3) family.

It is found in the cell outer membrane. Its function is as follows. May be a sugar porin with a broad carbohydrate specificity. This is Putative outer membrane porin BglH (bglH) from Escherichia coli (strain UTI89 / UPEC).